We begin with the raw amino-acid sequence, 295 residues long: Glutamyl-Q tRNA(Asp) synthetase (295 aa).

Residues 9-13 (RFAPT) and Glu45 contribute to the L-glutamate site. A 'HIGH' region motif is present at residues 12–22 (PTPSGFLHFGS). Residues Cys101, Cys103, Tyr115, and Cys119 each contribute to the Zn(2+) site. 2 residues coordinate L-glutamate: Tyr172 and Arg190. The 'KMSKS' region signature appears at 228 to 232 (KLGKS). Lys231 contributes to the ATP binding site.

Belongs to the class-I aminoacyl-tRNA synthetase family. GluQ subfamily. The cofactor is Zn(2+).

Catalyzes the tRNA-independent activation of glutamate in presence of ATP and the subsequent transfer of glutamate onto a tRNA(Asp). Glutamate is transferred on the 2-amino-5-(4,5-dihydroxy-2-cyclopenten-1-yl) moiety of the queuosine in the wobble position of the QUC anticodon. The protein is Glutamyl-Q tRNA(Asp) synthetase of Pseudomonas putida (strain W619).